A 366-amino-acid chain; its full sequence is tRNA/tmRNA (uracil-C(5))-methyltransferase (366 aa).

Residues Q190, Y218, N223, E239, and D299 each contribute to the S-adenosyl-L-methionine site. C324 serves as the catalytic Nucleophile. The active-site Proton acceptor is E358.

This sequence belongs to the class I-like SAM-binding methyltransferase superfamily. RNA M5U methyltransferase family. TrmA subfamily.

The enzyme catalyses uridine(54) in tRNA + S-adenosyl-L-methionine = 5-methyluridine(54) in tRNA + S-adenosyl-L-homocysteine + H(+). It catalyses the reaction uridine(341) in tmRNA + S-adenosyl-L-methionine = 5-methyluridine(341) in tmRNA + S-adenosyl-L-homocysteine + H(+). Its function is as follows. Dual-specificity methyltransferase that catalyzes the formation of 5-methyluridine at position 54 (m5U54) in all tRNAs, and that of position 341 (m5U341) in tmRNA (transfer-mRNA). The sequence is that of tRNA/tmRNA (uracil-C(5))-methyltransferase from Escherichia coli O157:H7.